A 670-amino-acid chain; its full sequence is tRNA 5-methylaminomethyl-2-thiouridine biosynthesis bifunctional protein MnmC (670 aa).

Positions 1-242 are tRNA (mnm(5)s(2)U34)-methyltransferase; the sequence is MTFSVQHAEI…KRECLSGLKI (242 aa). Residues 269–670 are FAD-dependent cmnm(5)s(2)U34 oxidoreductase; it reads IGGGIASLCA…KKWLKGSKVE (402 aa).

In the N-terminal section; belongs to the methyltransferase superfamily. tRNA (mnm(5)s(2)U34)-methyltransferase family. It in the C-terminal section; belongs to the DAO family. FAD is required as a cofactor.

Its subcellular location is the cytoplasm. The enzyme catalyses 5-aminomethyl-2-thiouridine(34) in tRNA + S-adenosyl-L-methionine = 5-methylaminomethyl-2-thiouridine(34) in tRNA + S-adenosyl-L-homocysteine + H(+). In terms of biological role, catalyzes the last two steps in the biosynthesis of 5-methylaminomethyl-2-thiouridine (mnm(5)s(2)U) at the wobble position (U34) in tRNA. Catalyzes the FAD-dependent demodification of cmnm(5)s(2)U34 to nm(5)s(2)U34, followed by the transfer of a methyl group from S-adenosyl-L-methionine to nm(5)s(2)U34, to form mnm(5)s(2)U34. The polypeptide is tRNA 5-methylaminomethyl-2-thiouridine biosynthesis bifunctional protein MnmC (Haemophilus influenzae (strain PittGG)).